The chain runs to 423 residues: Tumor necrosis factor receptor superfamily member 19 (423 aa).

The first 29 residues, 1-29 (MALKVLLEQEKTFFTLLVLLGYLSCKVTC), serve as a signal peptide directing secretion. The Extracellular portion of the chain corresponds to 30–170 (ESGDCRQQEF…TASSPRDTAL (141 aa)). TNFR-Cys repeat units lie at residues 33–72 (DCRQQEFRDRSGNCVPCNQCGPGMELSKECGFGYGEDAQC), 74–114 (TCRL…DAIC), and 116–149 (DCLPGFYRKTKLVGFQDMECVPCGDPPPPYEPHC). Cystine bridges form between Cys-34–Cys-46, Cys-49–Cys-62, Cys-52–Cys-72, Cys-75–Cys-89, Cys-92–Cys-106, Cys-95–Cys-114, Cys-117–Cys-135, and Cys-138–Cys-149. An N-linked (GlcNAc...) asparagine glycan is attached at Asn-105. A helical membrane pass occupies residues 171 to 191 (AAVICSALATVLLALLILCVI). Topologically, residues 192–423 (YCKRQFMEKK…LQVRQRLGSL (232 aa)) are cytoplasmic.

In terms of assembly, associates with TRAF1, TRAF2, TRAF3 and TRAF5. Interacts with LINGO1. As to expression, highly expressed in prostate. Detected at lower levels in thymus, spleen, testis, uterus, small intestine, colon and peripheral blood leukocytes.

It localises to the membrane. In terms of biological role, can mediate activation of JNK and NF-kappa-B. May promote caspase-independent cell death. This Homo sapiens (Human) protein is Tumor necrosis factor receptor superfamily member 19 (TNFRSF19).